Here is a 132-residue protein sequence, read N- to C-terminus: Replication enhancer protein (132 aa).

This sequence belongs to the geminiviridae replication enhancer protein family. As to quaternary structure, homooligomer. Interacts with the replication-associated protein (REP). Interacts with host proliferating cell nuclear antigen (PCNA). Interacts with host retinoblastoma-related protein 1 (RBR1), and may thereby deregulate the host cell cycle. Oligomerization and interaction with PCNA are necessary for optimal replication enhancement.

Increases viral DNA accumulation. Enhances infectivity and symptom expression. The chain is Replication enhancer protein from Macroptilium lathyroides (Lima bean).